The sequence spans 1177 residues: MRRAGRSRQFSSVEEAFSTSAARPGPRGRRSGRENTAKFVPATLSASTSFSRIEGISSRSVTLASPGSRSGSGPRSGPRLGPRNRSTSRYRWVPAAAGWTVGVIATVSLLGSVSPLIRYLIKVPREFINDYLFNFPDTSIAWSFVLALLAAALTARKRIAWLLLLGNMILAAALNVADIAAGDNTAAEIFGENLGFAVHIVAIVLLVLAYREFWAKVRKGALVKAAAVLVAGDVVGILVSWGLVELFPGTLARQDRLPYVVNRVVGFALADPDLFTGRPHVFLNAIFGLFGALALIMATIVLFQSQRAENALTGEDESAIRGLLELYGKNDSLGYFATRRDKSVVFAQSGRAAITYRVEIGVCLASGDPIGDPRAWPQAVDAWLGLCQTYGWAPGVMGASTQGARTYREAGLNALELGDEAILRTSEFKLSGPDMRGVRQAVTRARRAGLTVRIRRHRDISPEAMADTIARADAWRDTQTERGFSMALGRLGDPADGDCLLVEAIDRDGSVVAMLSLVPWGTTGVSLDLMRRSPSSPNGTIELMVSELALNAESLGITRISLNFAMFRSAFEQGAQLGAGPVARLWRGLLLFFSRWWQLETLYRSNMKYQPDWVPRYACYEDARLIPRVGVASVIAEGFLVLPFSRRDKVHTGHHPAVPARLAQSGLLHHDGSAPDVSGLRPERTDAEEARSRLPEQVRVRLAKLKVLQRNGVDAYPVGCPPSHTVAQALDADDQQDITVAGRILRIRDFGGVLFAQLRDWSGEMQVLLDNSRLERGRTADFTAAIDLGDLVEVSGQMGFSKKGTRSLIVTDWRMIGKCLRPLPNKWKGLTDPEARVRTRYVDLAVNPESRELIAARSEVLRSVRQTLFAKGFIEVETPILQQIHGGATARPFVTHINTYDMDLFLRIAPELYLKRLCVGGVERVFELGRAFRNEGVDFSHNPEFTLLEAYQAHADYRVWIDGCRELIQNAAQAAHGEQTVLRPGADGRLQPVDISGIWAVKTVHDAVSEALGEQVDPGTSLSTLRKLSDAARIPYRAHWDAGAVVLELYEHLVEDRTEEPTFYVDFPTSVSPLTRPHRSRPGVAERWDLVAWGVELATAYSELTDPVEQRRRLQEQSLLAAGGDPEAMELDEDFLQAMEYAMPPTGGLGMGVDRLVMLITGRSIRETLPFPLAKPH.

Disordered regions lie at residues 1–40 and 61–85; these read MRRA…AKFV and VTLA…PRNR. The phosphatidylglycerol lysyltransferase stretch occupies residues 1 to 676; sequence MRRAGRSRQF…LLHHDGSAPD (676 aa). A compositionally biased stretch (low complexity) spans 65–85; the sequence is SPGSRSGSGPRSGPRLGPRNR. 6 helical membrane-spanning segments follow: residues 93 to 113, 135 to 155, 159 to 179, 189 to 209, 227 to 247, and 281 to 301; these read VPAA…LGSV, FPDT…ALTA, IAWL…VADI, IFGE…LVLA, AVLV…VELF, and VFLN…ATIV. The interval 673 to 693 is disordered; the sequence is SAPDVSGLRPERTDAEEARSR. The segment at 677 to 1177 is lysine--tRNA ligase; the sequence is VSGLRPERTD…TLPFPLAKPH (501 aa). Basic and acidic residues predominate over residues 681 to 693; it reads RPERTDAEEARSR. A DNA-binding region (OB) is located at residues 738-816; that stretch reads ITVAGRILRI…SLIVTDWRMI (79 aa). Residues D1089 and E1096 each coordinate Mg(2+).

It in the N-terminal section; belongs to the LPG synthetase family. This sequence in the C-terminal section; belongs to the class-II aminoacyl-tRNA synthetase family. The cofactor is Mg(2+).

It is found in the cell membrane. The catalysed reaction is tRNA(Lys) + L-lysine + ATP = L-lysyl-tRNA(Lys) + AMP + diphosphate. The enzyme catalyses L-lysyl-tRNA(Lys) + a 1,2-diacyl-sn-glycero-3-phospho-(1'-sn-glycerol) = a 1,2-diacyl-sn-glycero-3-phospho-1'-(3'-O-L-lysyl)-sn-glycerol + tRNA(Lys). In terms of biological role, catalyzes the production of L-lysyl-tRNA(Lys)transfer and the transfer of a lysyl group from L-lysyl-tRNA(Lys) to membrane-bound phosphatidylglycerol (PG), which produces lysylphosphatidylglycerol (LPG), one of the components of the bacterial membrane with a positive net charge. LPG synthesis contributes to the resistance to cationic antimicrobial peptides (CAMPs) and likely protects M.tuberculosis against the CAMPs produced by competiting microorganisms (bacteriocins). In fact, the modification of anionic phosphatidylglycerol with positively charged L-lysine results in repulsion of the peptides. The chain is Lysylphosphatidylglycerol biosynthesis bifunctional protein LysX (lysX) from Mycolicibacterium paratuberculosis (strain ATCC BAA-968 / K-10) (Mycobacterium paratuberculosis).